A 347-amino-acid polypeptide reads, in one-letter code: Queuosine 5'-phosphate N-glycosylase/hydrolase (347 aa).

Queuine is bound by residues histidine 53, phenylalanine 237, aspartate 239, aspartate 321, and aspartate 326. Aspartate 239 serves as the catalytic Nucleophile or transition state stabilizer.

It belongs to the QNG1 protein family.

It carries out the reaction queuosine 5'-phosphate + H2O = queuine + D-ribose 5-phosphate. In terms of biological role, catalyzes the hydrolysis of queuosine 5'-phosphate, releasing the nucleobase queuine (q). Is required for salvage of queuine from exogenous queuosine (Q) that is imported and then converted to queuosine 5'-phosphate intracellularly. The chain is Queuosine 5'-phosphate N-glycosylase/hydrolase from Nematostella vectensis (Starlet sea anemone).